We begin with the raw amino-acid sequence, 702 residues long: Polyribonucleotide nucleotidyltransferase (702 aa).

Residues D487 and D493 each contribute to the Mg(2+) site. Residues 554-613 enclose the KH domain; it reads PRLLTIKIHPDKIREVIGKGGSTIQAITKETGTQIDIQDDGTIVIASVNAIAAQAAKARI. The S1 motif domain occupies 623–691; it reads GRIYEGKVAK…KQGRIRLSMK (69 aa).

Belongs to the polyribonucleotide nucleotidyltransferase family. As to quaternary structure, component of the RNA degradosome, which is a multiprotein complex involved in RNA processing and mRNA degradation. The cofactor is Mg(2+).

The protein localises to the cytoplasm. The enzyme catalyses RNA(n+1) + phosphate = RNA(n) + a ribonucleoside 5'-diphosphate. Involved in mRNA degradation. Catalyzes the phosphorolysis of single-stranded polyribonucleotides processively in the 3'- to 5'-direction. The chain is Polyribonucleotide nucleotidyltransferase from Stenotrophomonas maltophilia (strain K279a).